A 197-amino-acid polypeptide reads, in one-letter code: Phosphoheptose isomerase (197 aa).

Positions 40 to 197 (CIASIAQGGK…LVEHSIFGKQ (158 aa)) constitute an SIS domain. 55–57 (NGG) is a substrate binding site. 2 residues coordinate Zn(2+): H64 and E68. Substrate is bound by residues E68, 97–98 (ND), 123–125 (STS), S128, and Q175. Q175 and H183 together coordinate Zn(2+).

The protein belongs to the SIS family. GmhA subfamily. Homotetramer. It depends on Zn(2+) as a cofactor.

Its subcellular location is the cytoplasm. It catalyses the reaction 2 D-sedoheptulose 7-phosphate = D-glycero-alpha-D-manno-heptose 7-phosphate + D-glycero-beta-D-manno-heptose 7-phosphate. It participates in carbohydrate biosynthesis; D-glycero-D-manno-heptose 7-phosphate biosynthesis; D-glycero-alpha-D-manno-heptose 7-phosphate and D-glycero-beta-D-manno-heptose 7-phosphate from sedoheptulose 7-phosphate: step 1/1. It functions in the pathway capsule biogenesis; capsule polysaccharide biosynthesis. Functionally, catalyzes the isomerization of sedoheptulose 7-phosphate in D-glycero-D-manno-heptose 7-phosphate. This is Phosphoheptose isomerase (gmhA) from Burkholderia pseudomallei (strain K96243).